The following is a 162-amino-acid chain: NADH-quinone oxidoreductase subunit I (162 aa).

4Fe-4S ferredoxin-type domains are found at residues 52 to 82 (LRRYPNGEERCIACKLCEAICPAQAITIEAG) and 93 to 122 (VRYDIDMVKCIYCGLCQEACPVDAIVEGPN). Cysteine 62, cysteine 65, cysteine 68, cysteine 72, cysteine 102, cysteine 105, cysteine 108, and cysteine 112 together coordinate [4Fe-4S] cluster.

It belongs to the complex I 23 kDa subunit family. As to quaternary structure, NDH-1 is composed of 14 different subunits. Subunits NuoA, H, J, K, L, M, N constitute the membrane sector of the complex. [4Fe-4S] cluster serves as cofactor.

It localises to the cell inner membrane. It carries out the reaction a quinone + NADH + 5 H(+)(in) = a quinol + NAD(+) + 4 H(+)(out). NDH-1 shuttles electrons from NADH, via FMN and iron-sulfur (Fe-S) centers, to quinones in the respiratory chain. The immediate electron acceptor for the enzyme in this species is believed to be ubiquinone. Couples the redox reaction to proton translocation (for every two electrons transferred, four hydrogen ions are translocated across the cytoplasmic membrane), and thus conserves the redox energy in a proton gradient. In Nitrobacter hamburgensis (strain DSM 10229 / NCIMB 13809 / X14), this protein is NADH-quinone oxidoreductase subunit I.